Here is a 278-residue protein sequence, read N- to C-terminus: Large ribosomal subunit protein uL2 (278 aa).

The span at 212 to 221 (NRWLGKRPHN) shows a compositional bias: basic residues. The interval 212-278 (NRWLGKRPHN…ILSSRHNRKK (67 aa)) is disordered.

It belongs to the universal ribosomal protein uL2 family. As to quaternary structure, part of the 50S ribosomal subunit. Forms a bridge to the 30S subunit in the 70S ribosome.

Functionally, one of the primary rRNA binding proteins. Required for association of the 30S and 50S subunits to form the 70S ribosome, for tRNA binding and peptide bond formation. It has been suggested to have peptidyltransferase activity; this is somewhat controversial. Makes several contacts with the 16S rRNA in the 70S ribosome. The protein is Large ribosomal subunit protein uL2 of Methylorubrum populi (strain ATCC BAA-705 / NCIMB 13946 / BJ001) (Methylobacterium populi).